An 886-amino-acid chain; its full sequence is MQDKYNHLDVERSAQAQWIAADAYRVTEDTSGKKPRGKYYACSMLPYPSGKLHMGHVRNYTINDMLTRYLRMKGYNVLMPMGWDAFGLPAENAAMKNGVPPAQWTYDNIAYMKKQMQAMGLAIDWSREVATCDPSYYKWNQWLFLKMLEKGIAYRKTQVVNWDPVDQTVLANEQVIDGKGWRTGATVEKREIPGYYLKITDYAEELLGHVQHQLPGWPERVRLMQENWIGKSEGVRFAFTHDIRDASGALIGGGKMYVFTTRADTIMGVTFCAVAPEHPLALHAAALNPQLAAFIEECKAGGTTEAELATQEKKGKPTGLFVTHPLTGEQVEVWVGNYVLMSYGDGAVMGVPAHDERDFEFAKKYGLPIKQVTDVKGQAYSLEAWADWYGDKQQGVAINSDKYDGLGLKACVDAVAADLAAKGLGEKKTTWRLRDWGVSRQRYWGTPIPIIHCDEHGAVPVPEKDLPVVLPQDCVPDGSGNPLHRHEGFHAGVVCPVCGKPARRETDTMDTFVDSSWYYMRYCDPKNDQQMVAGGADYWMPMDQYIGGIEHAILHLLYARFWTKVMRDLGLVKIDEPFTKLLTQGMVLNHIYSRKGDKGGIEYFWPSEVEDIHDAAGKVTGAKRKSDGLLVNYEGVGTMSKSKNNGVDPQDLIERYGADTARLYTMFTAPPEATLEWNDAAVEGSYRFLRRVWNFGVKLSAAKTAAAAAQAAGFVAEYGKEAKELRREIHTVLKQIDYDYQRMQYNTVVSGNMKLLNALENFTNDGAAGSHKALHESFGILLRCLYPATPHLAHALWSELGYAAQQGDLLDAPWPEVDSGALQQDVIELVLQVNGKLRGSVTVPAGADKATIEAAALASEAFLKQAAGAPAKKVIVVPGRLVNIVV.

The 'HIGH' region motif lies at 46–56 (PYPSGKLHMGH). A 'KMSKS' region motif is present at residues 638–642 (TMSKS). Lys-641 contributes to the ATP binding site.

Belongs to the class-I aminoacyl-tRNA synthetase family.

The protein localises to the cytoplasm. It carries out the reaction tRNA(Leu) + L-leucine + ATP = L-leucyl-tRNA(Leu) + AMP + diphosphate. The protein is Leucine--tRNA ligase of Polaromonas sp. (strain JS666 / ATCC BAA-500).